A 307-amino-acid polypeptide reads, in one-letter code: Coenzyme PQQ synthesis protein B (307 aa).

The protein belongs to the PqqB family.

Its pathway is cofactor biosynthesis; pyrroloquinoline quinone biosynthesis. In terms of biological role, may be involved in the transport of PQQ or its precursor to the periplasm. The polypeptide is Coenzyme PQQ synthesis protein B (Gluconacetobacter diazotrophicus (strain ATCC 49037 / DSM 5601 / CCUG 37298 / CIP 103539 / LMG 7603 / PAl5)).